We begin with the raw amino-acid sequence, 430 residues long: Histidine--tRNA ligase (430 aa).

It belongs to the class-II aminoacyl-tRNA synthetase family. In terms of assembly, homodimer.

The protein resides in the cytoplasm. It carries out the reaction tRNA(His) + L-histidine + ATP = L-histidyl-tRNA(His) + AMP + diphosphate + H(+). This chain is Histidine--tRNA ligase, found in Chlamydia felis (strain Fe/C-56) (Chlamydophila felis).